The following is a 1025-amino-acid chain: RNA cytidine acetyltransferase (1025 aa).

Position 287 to 296 (287 to 296 (GRGKSAALGL)) interacts with ATP. An N6-acetyllysine modification is found at Lys426. Arg470 is an ATP binding site. One can recognise an N-acetyltransferase domain in the interval 558-753 (CLLPPVPPTQ…HSCIMLKTLT (196 aa)). Acetyl-CoA contacts are provided by residues 629–631 (IAV) and 636–642 (QGMGYGS). The tract at residues 702–1025 (PAERLDYLGV…KKDMKLKRKK (324 aa)) is required for localization to the nucleolus and midbody. Thr716 bears the Phosphothreonine mark. Arg725 contacts acetyl-CoA. 3 positions are modified to phosphoserine: Ser934, Ser984, and Ser987. The disordered stretch occupies residues 990–1025 (SDKKRKLEAKQEPKQSKKLKNRETKNKKDMKLKRKK). Over residues 997 to 1018 (EAKQEPKQSKKLKNRETKNKKD) the composition is skewed to basic and acidic residues.

This sequence belongs to the RNA cytidine acetyltransferase family. NAT10 subfamily. In terms of assembly, part of the small subunit (SSU) processome, composed of more than 70 proteins and the RNA chaperone small nucleolar RNA (snoRNA) U3. Interacts with THUMPD1. Interacts with SUN1 (via N-terminus). Interacts with TERT. Acetylation at Lys-426 is required to activation of rRNA transcription. May be autoacetylated; however ability to autoacetylate in vivo requires additional evidences.

The protein resides in the nucleus. It is found in the nucleolus. It localises to the midbody. The catalysed reaction is a cytidine in 18S rRNA + acetyl-CoA + ATP + H2O = an N(4)-acetylcytidine in 18S rRNA + ADP + phosphate + CoA + H(+). The enzyme catalyses a cytidine in tRNA + acetyl-CoA + ATP + H2O = an N(4)-acetylcytidine in tRNA + ADP + phosphate + CoA + H(+). It carries out the reaction a cytidine in mRNA + acetyl-CoA + ATP + H2O = an N(4)-acetylcytidine in mRNA + ADP + phosphate + CoA + H(+). With respect to regulation, specifically inhibited by remodelin (4-[2-(2-cyclopentylidenehydrazinyl)-4-thiazolyl]-benzonitrile, monohydrobromide), a hydrobromide salt molecule. Remodelin can improve nuclear architecture, chromatin organization and fitness of cells from patients suffering from Hutchinson-Gilford progeria syndrome (HGPS); molecular mechanisms explaining the relation between NAT10 activity and nuclear architecture are however unclear. In terms of biological role, RNA cytidine acetyltransferase that catalyzes the formation of N(4)-acetylcytidine (ac4C) modification on mRNAs, 18S rRNA and tRNAs. Catalyzes ac4C modification of a broad range of mRNAs, enhancing mRNA stability and translation. mRNA ac4C modification is frequently present within wobble cytidine sites and promotes translation efficiency. Mediates the formation of ac4C at position 1842 in 18S rRNA. May also catalyze the formation of ac4C at position 1337 in 18S rRNA. Required for early nucleolar cleavages of precursor rRNA at sites A0, A1 and A2 during 18S rRNA synthesis. Catalyzes the formation of ac4C in serine and leucine tRNAs. Requires the tRNA-binding adapter protein THUMPD1 for full tRNA acetyltransferase activity but not for 18S rRNA acetylation. In addition to RNA acetyltransferase activity, also able to acetylate lysine residues of proteins, such as histones, microtubules, p53/TP53 and MDM2, in vitro. The relevance of the protein lysine acetyltransferase activity is however unsure in vivo. Activates telomerase activity by stimulating the transcription of TERT, and may also regulate telomerase function by affecting the balance of telomerase subunit assembly, disassembly, and localization. Involved in the regulation of centrosome duplication by acetylating CENATAC during mitosis, promoting SASS6 proteasome degradation. Part of the small subunit (SSU) processome, first precursor of the small eukaryotic ribosomal subunit. During the assembly of the SSU processome in the nucleolus, many ribosome biogenesis factors, an RNA chaperone and ribosomal proteins associate with the nascent pre-rRNA and work in concert to generate RNA folding, modifications, rearrangements and cleavage as well as targeted degradation of pre-ribosomal RNA by the RNA exosome. This chain is RNA cytidine acetyltransferase, found in Homo sapiens (Human).